The chain runs to 391 residues: Tryptophan synthase beta chain (391 aa).

K84 carries the N6-(pyridoxal phosphate)lysine modification.

It belongs to the TrpB family. As to quaternary structure, tetramer of two alpha and two beta chains. It depends on pyridoxal 5'-phosphate as a cofactor.

It catalyses the reaction (1S,2R)-1-C-(indol-3-yl)glycerol 3-phosphate + L-serine = D-glyceraldehyde 3-phosphate + L-tryptophan + H2O. The protein operates within amino-acid biosynthesis; L-tryptophan biosynthesis; L-tryptophan from chorismate: step 5/5. Its function is as follows. The beta subunit is responsible for the synthesis of L-tryptophan from indole and L-serine. The polypeptide is Tryptophan synthase beta chain (Caldanaerobacter subterraneus subsp. tengcongensis (strain DSM 15242 / JCM 11007 / NBRC 100824 / MB4) (Thermoanaerobacter tengcongensis)).